The following is a 260-amino-acid chain: Hydroxyethylthiazole kinase 1 (260 aa).

Met-39 contributes to the substrate binding site. ATP contacts are provided by Arg-115 and Thr-160. Gly-187 contributes to the substrate binding site.

Belongs to the Thz kinase family. The cofactor is Mg(2+).

It catalyses the reaction 5-(2-hydroxyethyl)-4-methylthiazole + ATP = 4-methyl-5-(2-phosphooxyethyl)-thiazole + ADP + H(+). It functions in the pathway cofactor biosynthesis; thiamine diphosphate biosynthesis; 4-methyl-5-(2-phosphoethyl)-thiazole from 5-(2-hydroxyethyl)-4-methylthiazole: step 1/1. Functionally, catalyzes the phosphorylation of the hydroxyl group of 4-methyl-5-beta-hydroxyethylthiazole (THZ). The protein is Hydroxyethylthiazole kinase 1 of Streptococcus pneumoniae serotype 2 (strain D39 / NCTC 7466).